The chain runs to 145 residues: D-aminoacyl-tRNA deacylase (145 aa).

Positions Gly137–Pro138 match the Gly-cisPro motif, important for rejection of L-amino acids motif.

This sequence belongs to the DTD family. As to quaternary structure, homodimer.

It is found in the cytoplasm. The catalysed reaction is glycyl-tRNA(Ala) + H2O = tRNA(Ala) + glycine + H(+). It catalyses the reaction a D-aminoacyl-tRNA + H2O = a tRNA + a D-alpha-amino acid + H(+). An aminoacyl-tRNA editing enzyme that deacylates mischarged D-aminoacyl-tRNAs. Also deacylates mischarged glycyl-tRNA(Ala), protecting cells against glycine mischarging by AlaRS. Acts via tRNA-based rather than protein-based catalysis; rejects L-amino acids rather than detecting D-amino acids in the active site. By recycling D-aminoacyl-tRNA to D-amino acids and free tRNA molecules, this enzyme counteracts the toxicity associated with the formation of D-aminoacyl-tRNA entities in vivo and helps enforce protein L-homochirality. This Psychromonas ingrahamii (strain DSM 17664 / CCUG 51855 / 37) protein is D-aminoacyl-tRNA deacylase.